Reading from the N-terminus, the 157-residue chain is Rieske domain-containing protein (157 aa).

Methionine 1 is subject to N-acetylmethionine. Serine 6 is modified (phosphoserine). Rieske domains lie at 16 to 127 (TSVC…VDNG) and 17 to 131 (SVCV…NIYV). [2Fe-2S] cluster contacts are provided by cysteine 57, histidine 59, cysteine 80, and histidine 83.

It depends on [2Fe-2S] cluster as a cofactor.

The polypeptide is Rieske domain-containing protein (Rfesd) (Mus musculus (Mouse)).